The sequence spans 150 residues: UPF0756 membrane protein HAPS_1649 (150 aa).

Helical transmembrane passes span 1–21 (MSLQ…LGIF), 27–46 (VTIS…SKYV), 52–72 (YGIK…LVSG), 82–102 (LINW…WLGG), and 123–143 (IIGV…AGIL).

It belongs to the UPF0756 family.

The protein localises to the cell membrane. In Glaesserella parasuis serovar 5 (strain SH0165) (Haemophilus parasuis), this protein is UPF0756 membrane protein HAPS_1649.